A 274-amino-acid polypeptide reads, in one-letter code: Serine/threonine-protein kinase 1 (274 aa).

Positions 16–273 (AVLAPKVVNG…HSFLASRHDY (258 aa)) constitute a Protein kinase domain. Residues 22-30 (VVNGRFGKM) and K46 each bind ATP. Catalysis depends on D134, which acts as the Proton acceptor.

It belongs to the protein kinase superfamily. Ser/Thr protein kinase family.

It carries out the reaction L-seryl-[protein] + ATP = O-phospho-L-seryl-[protein] + ADP + H(+). The enzyme catalyses L-threonyl-[protein] + ATP = O-phospho-L-threonyl-[protein] + ADP + H(+). In Orgyia pseudotsugata multicapsid polyhedrosis virus (OpMNPV), this protein is Serine/threonine-protein kinase 1 (PK1).